The following is a 59-amino-acid chain: Large ribosomal subunit protein bL32 (59 aa).

Positions 1–22 are enriched in basic residues; it reads MAVPKKKTSNSKRDSRRAHWNR. Residues 1–59 are disordered; sequence MAVPKKKTSNSKRDSRRAHWNRKANLAAQRALSTGKSILTGRAKGFEYPTKDDDEDDDE.

The protein belongs to the bacterial ribosomal protein bL32 family.

This is Large ribosomal subunit protein bL32 from Acaryochloris marina (strain MBIC 11017).